A 492-amino-acid polypeptide reads, in one-letter code: Ketol-acid reductoisomerase (NADP(+)) (492 aa).

The KARI N-terminal Rossmann domain maps to 17–208 (LGQCRLMKKN…GSNKAGVLES (192 aa)). Residues 45–48 (CGSQ), Arg68, Ser76, and Ser78 contribute to the NADP(+) site. His132 is an active-site residue. NADP(+) is bound at residue Gly158. 2 consecutive KARI C-terminal knotted domains span residues 209-344 (SFVA…KAPV) and 345-487 (YCET…MKDM). Residues Asp217, Glu221, Glu389, and Glu393 each contribute to the Mg(2+) site. Residue Ser414 participates in substrate binding.

Belongs to the ketol-acid reductoisomerase family. It depends on Mg(2+) as a cofactor.

It catalyses the reaction (2R)-2,3-dihydroxy-3-methylbutanoate + NADP(+) = (2S)-2-acetolactate + NADPH + H(+). The catalysed reaction is (2R,3R)-2,3-dihydroxy-3-methylpentanoate + NADP(+) = (S)-2-ethyl-2-hydroxy-3-oxobutanoate + NADPH + H(+). Its pathway is amino-acid biosynthesis; L-isoleucine biosynthesis; L-isoleucine from 2-oxobutanoate: step 2/4. It functions in the pathway amino-acid biosynthesis; L-valine biosynthesis; L-valine from pyruvate: step 2/4. Functionally, involved in the biosynthesis of branched-chain amino acids (BCAA). Catalyzes an alkyl-migration followed by a ketol-acid reduction of (S)-2-acetolactate (S2AL) to yield (R)-2,3-dihydroxy-isovalerate. In the isomerase reaction, S2AL is rearranged via a Mg-dependent methyl migration to produce 3-hydroxy-3-methyl-2-ketobutyrate (HMKB). In the reductase reaction, this 2-ketoacid undergoes a metal-dependent reduction by NADPH to yield (R)-2,3-dihydroxy-isovalerate. This chain is Ketol-acid reductoisomerase (NADP(+)), found in Blochmanniella floridana.